A 307-amino-acid chain; its full sequence is Homoserine kinase (307 aa).

95–105 (PQSRGLGSSAS) is a binding site for ATP.

The protein belongs to the GHMP kinase family. Homoserine kinase subfamily.

It localises to the cytoplasm. The catalysed reaction is L-homoserine + ATP = O-phospho-L-homoserine + ADP + H(+). It functions in the pathway amino-acid biosynthesis; L-threonine biosynthesis; L-threonine from L-aspartate: step 4/5. Its function is as follows. Catalyzes the ATP-dependent phosphorylation of L-homoserine to L-homoserine phosphate. The polypeptide is Homoserine kinase (Corynebacterium aurimucosum (strain ATCC 700975 / DSM 44827 / CIP 107346 / CN-1) (Corynebacterium nigricans)).